The following is a 367-amino-acid chain: MNSNKKATIVVDAQFGSTGKGLIAGYLAERDQPDVVMTAWSANAGHTYINAEGRKFVHCMLANGIVSPKLTTVLIGPGSQMNAELLRDEILSCADLLQGKTILLHASAALILQKHVEEEAGPMTKIGSTKKGCGAAMIAKIRRNPDDNNTVGANGDYMEEHIYGPVREAGVFIRTATNAEYMAVVYDAERIQVEGAQGFSLGINNGFYPYVTSRECTPAQVAVDVNLPLAFIDKVVACMRTLPIRVANRYNDKGEQIGWSGPCYPDQKELDWEKDLGMEAELTTVTKLPRRIFTFSYEQTKAALEVIRPDEVFLNFCNYLEPDEVAAVIGTIERAAHELKVPGPMPLARYYGYGPTVNDIDLDMRHQ.

Catalysis depends on Ser17, which acts as the Proton acceptor. ATP-binding residues include Ser17, Thr18, Gly19, Lys20, and Gly21. Position 17 (Ser17) interacts with dGMP. A Mg(2+)-binding site is contributed by Ser17. Asn43 is a binding site for dGMP. The ATP site is built by Gly45, His46, and Thr47. A Mg(2+)-binding site is contributed by Gly45. Residues Ser128, Thr129, and Arg143 each coordinate dGMP. Gln197 lines the ATP pocket. Thr212 provides a ligand contact to dGMP. Mg(2+) is bound at residue Thr284. L-aspartate is bound by residues Thr284, Val285, and Arg290. Residues Asn315, Asn318, and Gly354 each contribute to the ATP site.

This sequence belongs to the Caudovirales PurZ family. It depends on Mg(2+) as a cofactor.

It carries out the reaction dGMP + L-aspartate + ATP = (2S)-2-amino-2'-deoxyadenylo-succinate + ADP + phosphate + 2 H(+). Its pathway is purine metabolism. In terms of biological role, involved in the synthesis of the atypical nucleotide dZTP (2-amino-2'-deoxyadenosine-5'-triphosphate). Catalyzes the condensation of aspartate with deoxyguanylate into dSMP (N6-succino-2-amino-2'-deoxyadenylate), which undergoes defumarylation and phosphorylation respectively by host PurB and guanylate/nucleoside diphosphate kinases to give dZTP. dZTP is integrated into the viral genome instead of adenine by the viral DNA polymerase. This Z-base probably completely replaces adenosine and forms a triple bond to the opposite T-base. The resulting non-standard viral DNA is called Z-genome. The chemically modified DNA is probably harder for the host bacteria to digest with nucleases or restriction enzymes. In Salmonella phage PMBT28, this protein is N6-succino-2-amino-2'-deoxyadenylate synthase.